Reading from the N-terminus, the 214-residue chain is Transmembrane emp24 domain-containing protein p24delta9 (214 aa).

A signal peptide spans 1-24 (MFLRSLNLCTILLFLAISSQVSQS). Over 25–181 (LHFELQSGRT…QNLNRATNSK (157 aa)) the chain is Lumenal. Positions 34–149 (TKCISEDIKS…VEVMEFDVKR (116 aa)) constitute a GOLD domain. Positions 164–177 (LREREEEMQNLNRA) form a coiled coil. Omega-N-methylated arginine is present on Arg167. The helical transmembrane segment at 182–202 (MAWLSFLSLFVCLGVAGMQFV) threads the bilayer. Residues 203–214 (HLKTFFEKKKVI) lie on the Cytoplasmic side of the membrane. The COPII vesicle coat-binding motif lies at 207-208 (FF). Positions 207–214 (FFEKKKVI) match the COPI vesicle coat-binding motif.

The protein belongs to the EMP24/GP25L family. As to quaternary structure, probably oligomerizes with other members of the EMP24/GP25L family. Associates with the COPI vesicle coat (coatomer). Associates with the COPII vesicle coat (coatomer).

The protein resides in the endoplasmic reticulum membrane. It localises to the golgi apparatus. It is found in the cis-Golgi network membrane. Its subcellular location is the golgi stack membrane. Its function is as follows. Involved in vesicular protein trafficking. Mainly functions in the early secretory pathway. Thought to act as cargo receptor at the lumenal side for incorporation of secretory cargo molecules into transport vesicles and to be involved in vesicle coat formation at the cytoplasmic side. This is Transmembrane emp24 domain-containing protein p24delta9 from Arabidopsis thaliana (Mouse-ear cress).